Consider the following 257-residue polypeptide: Diphthine synthase (257 aa).

Residues leucine 9, aspartate 83, methionine 86, 111–112 (SI), and isoleucine 163 each bind S-adenosyl-L-methionine.

Belongs to the diphthine synthase family. In terms of assembly, homodimer.

The enzyme catalyses 2-[(3S)-amino-3-carboxypropyl]-L-histidyl-[translation elongation factor 2] + 3 S-adenosyl-L-methionine = diphthine-[translation elongation factor 2] + 3 S-adenosyl-L-homocysteine + 3 H(+). The protein operates within protein modification; peptidyl-diphthamide biosynthesis. Functionally, S-adenosyl-L-methionine-dependent methyltransferase that catalyzes the trimethylation of the amino group of the modified target histidine residue in translation elongation factor 2 (EF-2), to form an intermediate called diphthine. The three successive methylation reactions represent the second step of diphthamide biosynthesis. This chain is Diphthine synthase, found in Thermoplasma acidophilum (strain ATCC 25905 / DSM 1728 / JCM 9062 / NBRC 15155 / AMRC-C165).